A 213-amino-acid polypeptide reads, in one-letter code: uncharacterized protein (213 aa).

A helical transmembrane segment spans residues 22-42 (WFGLSMVSIAVIFGPLTGAHV). Positions 43 to 45 (NPA) match the NPA 1 motif. Helical transmembrane passes span 63-83 (VYIIAQCIGAFIVALIVWLLF), 112-132 (NLLSEIVTTFSLLFILFTLNH), and 138-158 (GVAMFFVFTGVAGGVMSFGGL). The NPA 2 signature appears at 164-166 (NPA). Residues 188-208 (FDYAWVPVLRPVIGAILAAWL) traverse the membrane as a helical segment.

This sequence belongs to the MIP/aquaporin (TC 1.A.8) family.

Its subcellular location is the cell membrane. This is an uncharacterized protein from Haemophilus influenzae (strain ATCC 51907 / DSM 11121 / KW20 / Rd).